Reading from the N-terminus, the 201-residue chain is Ribosome maturation factor RimP (201 aa).

This sequence belongs to the RimP family.

Its subcellular location is the cytoplasm. In terms of biological role, required for maturation of 30S ribosomal subunits. This Rhizobium johnstonii (strain DSM 114642 / LMG 32736 / 3841) (Rhizobium leguminosarum bv. viciae) protein is Ribosome maturation factor RimP.